The chain runs to 240 residues: Glutathione S-transferase U9 (240 aa).

The GST N-terminal domain occupies 7–86; it reads NKVILHGSFA…YIDETWSNGP (80 aa). Residues 17–18, 43–44, 57–58, and 70–71 contribute to the glutathione site; these read SP, NK, KI, and ES. In terms of domain architecture, GST C-terminal spans 92–226; the sequence is DPYRRSKVRF…EQILEILRAF (135 aa). Threonine 161 carries the phosphothreonine modification.

This sequence belongs to the GST superfamily. Tau family.

Its subcellular location is the cytoplasm. The protein resides in the cytosol. It carries out the reaction RX + glutathione = an S-substituted glutathione + a halide anion + H(+). May be involved in the conjugation of reduced glutathione to a wide number of exogenous and endogenous hydrophobic electrophiles and have a detoxification role against certain herbicides. The protein is Glutathione S-transferase U9 (GSTU9) of Arabidopsis thaliana (Mouse-ear cress).